The primary structure comprises 433 residues: Probable phosphoglucosamine mutase (433 aa).

Catalysis depends on Ser-91, which acts as the Phosphoserine intermediate. Mg(2+) is bound by residues Ser-91, Asp-229, Asp-231, and Asp-233. The residue at position 91 (Ser-91) is a Phosphoserine.

Belongs to the phosphohexose mutase family. Requires Mg(2+) as cofactor. Post-translationally, activated by phosphorylation.

It carries out the reaction alpha-D-glucosamine 1-phosphate = D-glucosamine 6-phosphate. Catalyzes the conversion of glucosamine-6-phosphate to glucosamine-1-phosphate. The sequence is that of Probable phosphoglucosamine mutase from Methanococcoides burtonii (strain DSM 6242 / NBRC 107633 / OCM 468 / ACE-M).